The sequence spans 340 residues: GTPase Obg (340 aa).

An Obg domain is found at 1 to 159; that stretch reads MRFIDKAKIH…RWIELELKLI (159 aa). One can recognise an OBG-type G domain in the interval 160–331; that stretch reads ADIGIIGFPN…LIKLIAEVYE (172 aa). GTP contacts are provided by residues 166-173, 191-195, 213-216, 283-286, and 312-314; these read GFPNAGKS, FTTLT, DIPG, NKID, and SLV. Positions 173 and 193 each coordinate Mg(2+).

Belongs to the TRAFAC class OBG-HflX-like GTPase superfamily. OBG GTPase family. As to quaternary structure, monomer. It depends on Mg(2+) as a cofactor.

The protein resides in the cytoplasm. In terms of biological role, an essential GTPase which binds GTP, GDP and possibly (p)ppGpp with moderate affinity, with high nucleotide exchange rates and a fairly low GTP hydrolysis rate. Plays a role in control of the cell cycle, stress response, ribosome biogenesis and in those bacteria that undergo differentiation, in morphogenesis control. The protein is GTPase Obg of Persephonella marina (strain DSM 14350 / EX-H1).